The chain runs to 504 residues: 26S proteasome non-ATPase regulatory subunit 5 (504 aa).

Residue A2 is modified to N-acetylalanine.

It belongs to the proteasome subunit S5B/HSM3 family. As to quaternary structure, interacts with PSMC1, PSMC2, PSMD1 and PSMD6. Part of transient complex containing PSMD5, PSMC2, PSMC1 and PSMD2 formed during the assembly of the 26S proteasome.

In terms of biological role, acts as a chaperone during the assembly of the 26S proteasome, specifically of the base subcomplex of the PA700/19S regulatory complex (RC). In the initial step of the base subcomplex assembly is part of an intermediate PSMD5:PSMC2:PSMC1:PSMD2 module which probably assembles with a PSMD10:PSMC4:PSMC5:PAAF1 module followed by dissociation of PSMD5. This chain is 26S proteasome non-ATPase regulatory subunit 5 (PSMD5), found in Homo sapiens (Human).